We begin with the raw amino-acid sequence, 158 residues long: Transcription elongation factor GreA (158 aa).

The protein belongs to the GreA/GreB family.

In terms of biological role, necessary for efficient RNA polymerase transcription elongation past template-encoded arresting sites. The arresting sites in DNA have the property of trapping a certain fraction of elongating RNA polymerases that pass through, resulting in locked ternary complexes. Cleavage of the nascent transcript by cleavage factors such as GreA or GreB allows the resumption of elongation from the new 3'terminus. GreA releases sequences of 2 to 3 nucleotides. The protein is Transcription elongation factor GreA of Acinetobacter baumannii (strain SDF).